The sequence spans 321 residues: Secreted RxLR effector protein 71 (321 aa).

The N-terminal stretch at 1–23 (MRPTGWRWPVLSLLLVLLPFQAA) is a signal peptide. The RxLR signature appears at 84–87 (RSLR). N-linked (GlcNAc...) asparagine glycosylation occurs at Asn-114. A disordered region spans residues 210-237 (VSLGRDGNGPVRGISSSPTRLTRPRMGG).

It belongs to the RxLR effector family.

It localises to the secreted. The protein resides in the host cell. Functionally, secreted effector that partially suppresses the host cell death induced by cell death-inducing proteins. The chain is Secreted RxLR effector protein 71 from Plasmopara viticola (Downy mildew of grapevine).